A 648-amino-acid polypeptide reads, in one-letter code: Macrolide export ATP-binding/permease protein MacB (648 aa).

Positions 5–243 (LELKDIRRSY…AGGTEPVVNT (239 aa)) constitute an ABC transporter domain. 41–48 (GASGSGKS) lines the ATP pocket. The next 4 helical transmembrane spans lie at 273-293 (LLTM…VVVG), 523-543 (LFLT…VMNI), 576-596 (AVLV…LIAF), and 600-620 (LFLP…AFLC).

The protein belongs to the ABC transporter superfamily. Macrolide exporter (TC 3.A.1.122) family. Homodimer. Part of the tripartite efflux system MacAB-TolC, which is composed of an inner membrane transporter, MacB, a periplasmic membrane fusion protein, MacA, and an outer membrane component, TolC. The complex forms a large protein conduit and can translocate molecules across both the inner and outer membranes. Interacts with MacA.

Its subcellular location is the cell inner membrane. Its function is as follows. Part of the tripartite efflux system MacAB-TolC. MacB is a non-canonical ABC transporter that contains transmembrane domains (TMD), which form a pore in the inner membrane, and an ATP-binding domain (NBD), which is responsible for energy generation. Confers resistance against macrolides. The polypeptide is Macrolide export ATP-binding/permease protein MacB (Shigella sonnei (strain Ss046)).